A 346-amino-acid chain; its full sequence is Histidinol-phosphate aminotransferase (346 aa).

Residue Lys209 is modified to N6-(pyridoxal phosphate)lysine.

The protein belongs to the class-II pyridoxal-phosphate-dependent aminotransferase family. Histidinol-phosphate aminotransferase subfamily. Homodimer. Pyridoxal 5'-phosphate is required as a cofactor.

The catalysed reaction is L-histidinol phosphate + 2-oxoglutarate = 3-(imidazol-4-yl)-2-oxopropyl phosphate + L-glutamate. Its pathway is amino-acid biosynthesis; L-histidine biosynthesis; L-histidine from 5-phospho-alpha-D-ribose 1-diphosphate: step 7/9. The polypeptide is Histidinol-phosphate aminotransferase (Vibrio cholerae serotype O1 (strain ATCC 39541 / Classical Ogawa 395 / O395)).